A 152-amino-acid polypeptide reads, in one-letter code: UPF0260 protein BR1477/BS1330_I1471 (152 aa).

This sequence belongs to the UPF0260 family.

The polypeptide is UPF0260 protein BR1477/BS1330_I1471 (Brucella suis biovar 1 (strain 1330)).